A 311-amino-acid chain; its full sequence is Probable manganese-dependent inorganic pyrophosphatase (311 aa).

H9, D13, D15, D77, H99, and D151 together coordinate Mn(2+).

This sequence belongs to the PPase class C family. It depends on Mn(2+) as a cofactor.

The protein resides in the cytoplasm. It carries out the reaction diphosphate + H2O = 2 phosphate + H(+). This chain is Probable manganese-dependent inorganic pyrophosphatase, found in Streptococcus pyogenes serotype M1.